The chain runs to 340 residues: Probable protein phosphatase 2C 21 (340 aa).

The segment at 1 to 21 is disordered; the sequence is MGASPSRPLEQSPSSSEGENH. Positions 24 to 305 constitute a PPM-type phosphatase domain; the sequence is KYASYTTQGF…DNATAILVKF (282 aa). Mn(2+) contacts are provided by Asp58, Gly59, Asp254, and Asp296. The disordered stretch occupies residues 311–340; it reads DPDEVASARDEHQHNPEGGDEKLDINNDND. The segment covering 316–340 has biased composition (basic and acidic residues); sequence ASARDEHQHNPEGGDEKLDINNDND.

It belongs to the PP2C family. Mg(2+) serves as cofactor. Requires Mn(2+) as cofactor.

The enzyme catalyses O-phospho-L-seryl-[protein] + H2O = L-seryl-[protein] + phosphate. The catalysed reaction is O-phospho-L-threonyl-[protein] + H2O = L-threonyl-[protein] + phosphate. This is Probable protein phosphatase 2C 21 from Oryza sativa subsp. japonica (Rice).